We begin with the raw amino-acid sequence, 1141 residues long: DNA polymerase II large subunit (1141 aa).

Positions 567–587 (AGTRVGGRMGRPGKSAPRKMK) are disordered.

It belongs to the archaeal DNA polymerase II family. As to quaternary structure, heterodimer of a large subunit and a small subunit.

The enzyme catalyses DNA(n) + a 2'-deoxyribonucleoside 5'-triphosphate = DNA(n+1) + diphosphate. The catalysed reaction is Exonucleolytic cleavage in the 3'- to 5'-direction to yield nucleoside 5'-phosphates.. Functionally, possesses two activities: a DNA synthesis (polymerase) and an exonucleolytic activity that degrades single-stranded DNA in the 3'- to 5'-direction. Has a template-primer preference which is characteristic of a replicative DNA polymerase. This is DNA polymerase II large subunit from Methanocorpusculum labreanum (strain ATCC 43576 / DSM 4855 / Z).